Here is a 199-residue protein sequence, read N- to C-terminus: Recombination protein RecR (199 aa).

A C4-type zinc finger spans residues 58 to 73 (CSICCNITDTDPCSMC). One can recognise a Toprim domain in the interval 81–176 (SVICVVEDPR…KVTRIAHGLP (96 aa)).

It belongs to the RecR family.

In terms of biological role, may play a role in DNA repair. It seems to be involved in an RecBC-independent recombinational process of DNA repair. It may act with RecF and RecO. This chain is Recombination protein RecR, found in Clostridioides difficile (strain 630) (Peptoclostridium difficile).